The primary structure comprises 412 residues: Imidazolonepropionase (412 aa).

Residues His-76 and His-78 each contribute to the Fe(3+) site. The Zn(2+) site is built by His-76 and His-78. 4-imidazolone-5-propanoate is bound by residues Arg-85, Tyr-148, and His-181. An N-formimidoyl-L-glutamate-binding site is contributed by Tyr-148. His-242 serves as a coordination point for Fe(3+). His-242 lines the Zn(2+) pocket. Glu-245 contributes to the 4-imidazolone-5-propanoate binding site. Residue Asp-317 participates in Fe(3+) binding. Asp-317 lines the Zn(2+) pocket. N-formimidoyl-L-glutamate is bound by residues Asn-319 and Gly-321. Ser-322 contacts 4-imidazolone-5-propanoate.

The protein belongs to the metallo-dependent hydrolases superfamily. HutI family. Zn(2+) is required as a cofactor. Requires Fe(3+) as cofactor.

The protein resides in the cytoplasm. It catalyses the reaction 4-imidazolone-5-propanoate + H2O = N-formimidoyl-L-glutamate. It functions in the pathway amino-acid degradation; L-histidine degradation into L-glutamate; N-formimidoyl-L-glutamate from L-histidine: step 3/3. Functionally, catalyzes the hydrolytic cleavage of the carbon-nitrogen bond in imidazolone-5-propanoate to yield N-formimidoyl-L-glutamate. It is the third step in the universal histidine degradation pathway. The protein is Imidazolonepropionase of Staphylococcus aureus (strain bovine RF122 / ET3-1).